We begin with the raw amino-acid sequence, 370 residues long: Myomodulin neuropeptides 1 (370 aa).

A signal peptide spans 1 to 18; that stretch reads MQVYMLLPLAVFASLTYQ. Residues 19 to 50 constitute a propeptide that is removed on maturation; the sequence is GACEETAAAQTSSDASTSSASSEHAENELSRA. A compositionally biased stretch (low complexity) spans 28–40; it reads QTSSDASTSSASS. Residues 28 to 52 are disordered; sequence QTSSDASTSSASSEHAENELSRAKR. Leucine amide is present on residues L60 and L69. Positions 73–190 are excised as a propeptide; it reads GGPVEPESEE…EPEEGGLGEE (118 aa). Leucine amide is present on residues L199 and L209. Basic and acidic residues predominate over residues 210-226; that stretch reads GKREGEEGDEMDKKQDE. Positions 210–230 are disordered; the sequence is GKREGEEGDEMDKKQDESLND. Residues 213 to 237 constitute a propeptide that is removed on maturation; it reads EGEEGDEMDKKQDESLNDDFENDDI. Leucine amide is present on residues L246, L256, L266, L276, L286, L296, L306, L316, L326, L336, and L346. The interval 344–370 is disordered; it reads LRLGKRDDDEKEKKSLNMSRLGKRSTQ. Residues 347–358 are compositionally biased toward basic and acidic residues; that stretch reads GKRDDDEKEKKS. Positions 350–355 are excised as a propeptide; that stretch reads DDDEKE. L364 is subject to Leucine amide. Residues 368 to 370 constitute a propeptide that is removed on maturation; it reads STQ.

In terms of tissue distribution, expressed in all ganglia of the CNS, but only in a subset of neurons including L10 in the abdominal ganglion and B16 in the buccal ganglion.

It localises to the secreted. Exogenous application of myomodulins potentiates ARC muscle contraction. The chain is Myomodulin neuropeptides 1 (MYOMOD1) from Aplysia californica (California sea hare).